The primary structure comprises 1631 residues: ALK tyrosine kinase receptor (1631 aa).

The signal sequence occupies residues 1–18 (MGSVGLLGLLLLRLSVTA). The Extracellular portion of the chain corresponds to 19–1053 (SGSGAGTGSG…PHLPLSLVLS (1035 aa)). A disordered region spans residues 20–53 (GSGAGTGSGTGSGTGTGTGQLVGSPATGPALQPR). The span at 21–39 (SGAGTGSGTGSGTGTGTGQ) shows a compositional bias: gly residues. A heparin-binding region region spans residues 60 to 82 (RLQRKSLAVDFVVPSLFRVYARD). N-linked (GlcNAc...) asparagine glycosylation is found at N185, N260, N301, N340, N427, N440, N461, N579, N587, and N643. The MAM 1 domain occupies 280 to 443 (LECSFDFPCE…DFFALKNCSE (164 aa)). The MAM 2 domain occupies 494 to 652 (FYCNFENGFC…NISISLDCYL (159 aa)). A disulfide bridge connects residues C703 and C716. N724 carries an N-linked (GlcNAc...) asparagine glycan. Cysteines 798 and 809 form a disulfide. 4 N-linked (GlcNAc...) asparagine glycosylation sites follow: N823, N878, N879, and N901. A disulfide bond links C921 and C943. The N-linked (GlcNAc...) asparagine glycan is linked to N1001. Cystine bridges form between C1002–C1010, C1005–C1021, and C1023–C1036. The EGF-like stretch occupies residues 1002 to 1040 (CSHCEGDECHMDPESHKVICFCDHGTVLAEDGVSCIVSP). Residues 1054 to 1074 (VVTSALVAALVLAFSGIMIVY) traverse the membrane as a helical segment. Residues 1075–1631 (RRKHQELQAM…DALLKTPPGP (557 aa)) are Cytoplasmic-facing. The 277-residue stretch at 1131–1407 (ITLIRGLGHG…IEYCTQDPDV (277 aa)) folds into the Protein kinase domain. ATP is bound by residues 1137 to 1145 (LGHGAFGEV) and K1165. The active-site Proton acceptor is D1264. Disordered stretches follow at residues 1423–1493 (EEKV…GHVN), 1526–1554 (WFTE…REGS), and 1609–1631 (FEGT…PPGP).

In terms of assembly, homodimer; homodimerizes following heparin- and ligand-binding. Interacts with CBL, IRS1, PIK3R1 and PLCG1. Interacts with FRS2 and SHC1. Interacts with PTN and MDK. In terms of processing, phosphorylated at tyrosine residues by autocatalysis, which activates kinase activity. In cells not stimulated by a ligand, receptor protein tyrosine phosphatase beta and zeta complex (PTPRB/PTPRZ1) dephosphorylates ALK at the sites in ALK that are undergoing autophosphorylation through autoactivation.

It is found in the cell membrane. The enzyme catalyses L-tyrosyl-[protein] + ATP = O-phospho-L-tyrosyl-[protein] + ADP + H(+). Its activity is regulated as follows. Activated upon ALKAL2 ligand-binding. ALKAL2-driven activation is coupled with heparin-binding. Following ligand-binding, homodimerizes and autophosphorylates, activating its kinase activity. Inactivated through dephosphorylation by receptor protein tyrosine phosphatase beta and zeta complex (PTPRB/PTPRZ1) when there is no stimulation by a ligand. Functionally, neuronal receptor tyrosine kinase that is essentially and transiently expressed in specific regions of the central and peripheral nervous systems and plays an important role in the genesis and differentiation of the nervous system. Also acts as a key thinness protein involved in the resistance to weight gain: in hypothalamic neurons, controls energy expenditure acting as a negative regulator of white adipose tissue lipolysis and sympathetic tone to fine-tune energy homeostasis. Following activation by ALKAL2 ligand at the cell surface, transduces an extracellular signal into an intracellular response. In contrast, ALKAL1 is not a potent physiological ligand for ALK. Ligand-binding to the extracellular domain induces tyrosine kinase activation, leading to activation of the mitogen-activated protein kinase (MAPK) pathway. Phosphorylates almost exclusively at the first tyrosine of the Y-x-x-x-Y-Y motif. Induces tyrosine phosphorylation of CBL, FRS2, IRS1 and SHC1, as well as of the MAP kinases MAPK1/ERK2 and MAPK3/ERK1. ALK activation may also be regulated by pleiotrophin (PTN) and midkine (MDK). PTN-binding induces MAPK pathway activation, which is important for the anti-apoptotic signaling of PTN and regulation of cell proliferation. MDK-binding induces phosphorylation of the ALK target insulin receptor substrate (IRS1), activates mitogen-activated protein kinases (MAPKs) and PI3-kinase, resulting also in cell proliferation induction. Drives NF-kappa-B activation, probably through IRS1 and the activation of the AKT serine/threonine kinase. Recruitment of IRS1 to activated ALK and the activation of NF-kappa-B are essential for the autocrine growth and survival signaling of MDK. The protein is ALK tyrosine kinase receptor of Canis lupus familiaris (Dog).